Here is a 193-residue protein sequence, read N- to C-terminus: dCTP deaminase (193 aa).

Residues 110–115, Asp128, 136–138, Tyr171, Lys178, and Gln182 each bind dCTP; these read RSSLAR and VLE. Glu138 functions as the Proton donor/acceptor in the catalytic mechanism.

It belongs to the dCTP deaminase family. As to quaternary structure, homotrimer.

It carries out the reaction dCTP + H2O + H(+) = dUTP + NH4(+). It functions in the pathway pyrimidine metabolism; dUMP biosynthesis; dUMP from dCTP (dUTP route): step 1/2. In terms of biological role, catalyzes the deamination of dCTP to dUTP. This is dCTP deaminase from Aeromonas hydrophila subsp. hydrophila (strain ATCC 7966 / DSM 30187 / BCRC 13018 / CCUG 14551 / JCM 1027 / KCTC 2358 / NCIMB 9240 / NCTC 8049).